The chain runs to 89 residues: MAKKEMVEFDEAIHGEDLAKFIKEASDHKLKISGYNELIKDIRIRAKDELGVDGKMFNRLLALYHKDNRDVFEAETEEVVELYDTVFSK.

Homodimer.

Functionally, may play a role in transcription of several T4 genes. Binds double-stranded DNA and interacts preferentially with T4 late promoter regions. In Enterobacteria phage T4 (Bacteriophage T4), this protein is Double-stranded DNA-binding protein (dsbA).